The following is a 224-amino-acid chain: UPF0758 protein LCA_0852 (224 aa).

An MPN domain is found at Val100–Leu222. Zn(2+) is bound by residues His171, His173, and Asp184. The JAMM motif motif lies at His171–Asp184.

This sequence belongs to the UPF0758 family.

The chain is UPF0758 protein LCA_0852 from Latilactobacillus sakei subsp. sakei (strain 23K) (Lactobacillus sakei subsp. sakei).